We begin with the raw amino-acid sequence, 281 residues long: AB hydrolase superfamily protein YclE (281 aa).

Residues 30–268 (SAVYYPRLFS…SGHQPMLEEP (239 aa)) enclose the AB hydrolase-1 domain. Catalysis depends on S95, which acts as the Nucleophile. The active site involves D232. Catalysis depends on H261, which acts as the Proton donor.

Belongs to the AB hydrolase superfamily.

This chain is AB hydrolase superfamily protein YclE (yclE), found in Bacillus subtilis (strain 168).